The sequence spans 180 residues: Hypoxanthine-guanine phosphoribosyltransferase (180 aa).

Residues Lys-43 and Gly-44 each contribute to the diphosphate site. Residues Glu-99 and Asp-100 each contribute to the Mg(2+) site. Asp-103 acts as the Proton acceptor in catalysis. Residues Lys-131, 152–153 (FI), and Asp-159 each bind GMP. Arg-165 contributes to the diphosphate binding site.

It belongs to the purine/pyrimidine phosphoribosyltransferase family. Requires Mg(2+) as cofactor.

The protein resides in the cytoplasm. It carries out the reaction IMP + diphosphate = hypoxanthine + 5-phospho-alpha-D-ribose 1-diphosphate. It catalyses the reaction GMP + diphosphate = guanine + 5-phospho-alpha-D-ribose 1-diphosphate. Its pathway is purine metabolism; IMP biosynthesis via salvage pathway; IMP from hypoxanthine: step 1/1. The protein operates within purine metabolism; GMP biosynthesis via salvage pathway; GMP from guanine: step 1/1. Its function is as follows. Purine salvage pathway enzyme that catalyzes the transfer of the ribosyl-5-phosphate group from 5-phospho-alpha-D-ribose 1-diphosphate (PRPP) to the N9 position of the 6-oxopurines hypoxanthine and guanine to form the corresponding ribonucleotides IMP (inosine 5'-monophosphate) and GMP (guanosine 5'-monophosphate), with the release of PPi. The chain is Hypoxanthine-guanine phosphoribosyltransferase (hpt) from Streptococcus thermophilus (strain CNRZ 1066).